A 441-amino-acid polypeptide reads, in one-letter code: COBRA-like protein 2 (441 aa).

The first 28 residues, 1-28 (MNILFSRFSFLLLFLCSWTSFTFTTTEA), serve as a signal peptide directing secretion. Residues asparagine 37, asparagine 162, asparagine 170, asparagine 209, asparagine 234, asparagine 249, asparagine 314, asparagine 329, and asparagine 348 are each glycosylated (N-linked (GlcNAc...) asparagine). Asparagine 417 carries GPI-anchor amidated asparagine lipidation. The propeptide at 418–441 (ASPNIATSPFVILLITFLSVLILM) is removed in mature form.

This sequence belongs to the COBRA family. As to expression, expressed in roots, stems, leaves, flowers and siliques.

The protein resides in the cell membrane. This is COBRA-like protein 2 (COBL2) from Arabidopsis thaliana (Mouse-ear cress).